Reading from the N-terminus, the 214-residue chain is Riboflavin kinase (214 aa).

A disordered region spans residues 1 to 27; the sequence is MRPDRPRDPVTGPDEGPESPYPIRMSG. The Mg(2+) site is built by Thr44 and Asn46. Glu101 serves as the catalytic Nucleophile.

It belongs to the flavokinase family. The cofactor is Zn(2+). It depends on Mg(2+) as a cofactor.

It catalyses the reaction riboflavin + ATP = FMN + ADP + H(+). It participates in cofactor biosynthesis; FMN biosynthesis; FMN from riboflavin (ATP route): step 1/1. In terms of biological role, catalyzes the phosphorylation of riboflavin (vitamin B2) to form flavin mononucleotide (FMN) coenzyme. This Aspergillus niger (strain ATCC MYA-4892 / CBS 513.88 / FGSC A1513) protein is Riboflavin kinase (fmn1).